The chain runs to 464 residues: Soluble pyridine nucleotide transhydrogenase (464 aa).

FAD is bound at residue 35–44; that stretch reads DSRRQVGGNC.

It belongs to the class-I pyridine nucleotide-disulfide oxidoreductase family. FAD is required as a cofactor.

It localises to the cytoplasm. The catalysed reaction is NAD(+) + NADPH = NADH + NADP(+). In terms of biological role, conversion of NADPH, generated by peripheral catabolic pathways, to NADH, which can enter the respiratory chain for energy generation. The protein is Soluble pyridine nucleotide transhydrogenase of Pseudomonas fluorescens (strain Pf0-1).